Here is a 647-residue protein sequence, read N- to C-terminus: Chaperone protein DnaK (647 aa).

Thr198 is subject to Phosphothreonine; by autocatalysis. 3 stretches are compositionally biased toward basic and acidic residues: residues 514–529 (AEAN…ESVD), 540–557 (STEK…DADK), and 600–622 (SQEK…KDDN). Disordered regions lie at residues 514–557 (AEAN…DADK) and 596–647 (AIYK…EKSA). The segment covering 623–632 (VVDADFEEVK) has biased composition (acidic residues). Basic and acidic residues predominate over residues 633 to 647 (EESKEGKEEDKEKSA).

Belongs to the heat shock protein 70 family.

In terms of biological role, acts as a chaperone. The chain is Chaperone protein DnaK from Pelagibacter ubique (strain HTCC1062).